A 434-amino-acid chain; its full sequence is Trigger factor (434 aa).

The region spanning K161–P246 is the PPIase FKBP-type domain.

Belongs to the FKBP-type PPIase family. Tig subfamily.

It is found in the cytoplasm. The catalysed reaction is [protein]-peptidylproline (omega=180) = [protein]-peptidylproline (omega=0). In terms of biological role, involved in protein export. Acts as a chaperone by maintaining the newly synthesized protein in an open conformation. Functions as a peptidyl-prolyl cis-trans isomerase. This Marinobacter nauticus (strain ATCC 700491 / DSM 11845 / VT8) (Marinobacter aquaeolei) protein is Trigger factor.